A 384-amino-acid chain; its full sequence is FAD-dependent urate hydroxylase (384 aa).

FAD-binding positions include Gly-11, 30–31, Ser-43, and Val-125; that span reads EA. Substrate-binding positions include Asn-178, Arg-204, and 216–218; that span reads YFF. Residues Asp-285 and 295-299 contribute to the FAD site; that span reads GQGGC.

Belongs to the FAD-dependent urate hydroxylase family. FAD is required as a cofactor.

The enzyme catalyses urate + NADH + O2 + H(+) = 5-hydroxyisourate + NAD(+) + H2O. Its pathway is purine metabolism; urate degradation. In terms of biological role, catalyzes the hydroxylation of uric acid to 5-hydroxyisourate. The protein is FAD-dependent urate hydroxylase (hpxO) of Klebsiella oxytoca.